Reading from the N-terminus, the 546-residue chain is 2-isopropylmalate synthase (546 aa).

In terms of domain architecture, Pyruvate carboxyltransferase spans 8 to 271 (ILIFDTTLRD…NSFFGRSSDS (264 aa)). Residues Asp17, His208, His210, and Asn244 each contribute to the Mn(2+) site. The regulatory domain stretch occupies residues 408–546 (QLSHVQVSCG…KNKVLSNPKK (139 aa)).

The protein belongs to the alpha-IPM synthase/homocitrate synthase family. LeuA type 1 subfamily. As to quaternary structure, homodimer. Requires Mn(2+) as cofactor.

It localises to the cytoplasm. The catalysed reaction is 3-methyl-2-oxobutanoate + acetyl-CoA + H2O = (2S)-2-isopropylmalate + CoA + H(+). The protein operates within amino-acid biosynthesis; L-leucine biosynthesis; L-leucine from 3-methyl-2-oxobutanoate: step 1/4. In terms of biological role, catalyzes the condensation of the acetyl group of acetyl-CoA with 3-methyl-2-oxobutanoate (2-ketoisovalerate) to form 3-carboxy-3-hydroxy-4-methylpentanoate (2-isopropylmalate). This is 2-isopropylmalate synthase from Prochlorococcus marinus subsp. pastoris (strain CCMP1986 / NIES-2087 / MED4).